Consider the following 119-residue polypeptide: Holo-[acyl-carrier-protein] synthase (119 aa).

Residues D8 and E59 each contribute to the Mg(2+) site.

It belongs to the P-Pant transferase superfamily. AcpS family. Mg(2+) is required as a cofactor.

The protein localises to the cytoplasm. It carries out the reaction apo-[ACP] + CoA = holo-[ACP] + adenosine 3',5'-bisphosphate + H(+). Transfers the 4'-phosphopantetheine moiety from coenzyme A to a Ser of acyl-carrier-protein. The polypeptide is Holo-[acyl-carrier-protein] synthase (Lactococcus lactis subsp. cremoris (strain SK11)).